Reading from the N-terminus, the 160-residue chain is SsrA-binding protein (160 aa).

This sequence belongs to the SmpB family.

It localises to the cytoplasm. Required for rescue of stalled ribosomes mediated by trans-translation. Binds to transfer-messenger RNA (tmRNA), required for stable association of tmRNA with ribosomes. tmRNA and SmpB together mimic tRNA shape, replacing the anticodon stem-loop with SmpB. tmRNA is encoded by the ssrA gene; the 2 termini fold to resemble tRNA(Ala) and it encodes a 'tag peptide', a short internal open reading frame. During trans-translation Ala-aminoacylated tmRNA acts like a tRNA, entering the A-site of stalled ribosomes, displacing the stalled mRNA. The ribosome then switches to translate the ORF on the tmRNA; the nascent peptide is terminated with the 'tag peptide' encoded by the tmRNA and targeted for degradation. The ribosome is freed to recommence translation, which seems to be the essential function of trans-translation. The chain is SsrA-binding protein from Mannheimia succiniciproducens (strain KCTC 0769BP / MBEL55E).